The sequence spans 341 residues: tRNA N6-adenosine threonylcarbamoyltransferase (341 aa).

Positions 112 and 116 each coordinate Fe cation. Substrate is bound by residues 134–138 (LASGG), D167, G180, and N279. A Fe cation-binding site is contributed by D307.

This sequence belongs to the KAE1 / TsaD family. Requires Fe(2+) as cofactor.

It localises to the cytoplasm. It carries out the reaction L-threonylcarbamoyladenylate + adenosine(37) in tRNA = N(6)-L-threonylcarbamoyladenosine(37) in tRNA + AMP + H(+). In terms of biological role, required for the formation of a threonylcarbamoyl group on adenosine at position 37 (t(6)A37) in tRNAs that read codons beginning with adenine. Is involved in the transfer of the threonylcarbamoyl moiety of threonylcarbamoyl-AMP (TC-AMP) to the N6 group of A37, together with TsaE and TsaB. TsaD likely plays a direct catalytic role in this reaction. The protein is tRNA N6-adenosine threonylcarbamoyltransferase of Rickettsia bellii (strain OSU 85-389).